Reading from the N-terminus, the 408-residue chain is Aurora kinase A-B (408 aa).

Basic and acidic residues predominate over residues 1 to 10 (MERAVKENHK). Residues 1–128 (MERAVKENHK…QGKTLAVPKE (128 aa)) are disordered. The span at 85-110 (GHQTSKPQGPNENRNPQQTSHSSTPN) shows a compositional bias: polar residues. The Protein kinase domain maps to 140–390 (FEIGRPLGKG…LKGVLEHPWI (251 aa)). ATP contacts are provided by residues lysine 150, lysine 169, and 217 to 220 (LDYA). Catalysis depends on aspartate 263, which acts as the Proton acceptor. Residue aspartate 281 coordinates ATP. Residues 287-300 (HAPSSRRTTLCGTL) are activation segment.

It belongs to the protein kinase superfamily. Ser/Thr protein kinase family. Aurora subfamily. Interacts with kif2c and kif11. In terms of processing, phosphorylated. Autophosphorylated on a serine residue.

The protein resides in the cytoplasm. Its subcellular location is the cytoskeleton. The protein localises to the spindle pole. It localises to the microtubule organizing center. It is found in the centrosome. It catalyses the reaction L-seryl-[protein] + ATP = O-phospho-L-seryl-[protein] + ADP + H(+). The catalysed reaction is L-threonyl-[protein] + ATP = O-phospho-L-threonyl-[protein] + ADP + H(+). Functionally, mitotic serine/threonine kinases that contributes to the regulation of cell cycle progression. Associates with the centrosome and the spindle microtubules during mitosis and plays a critical role in various mitotic events including the establishment of mitotic spindle, centrosome duplication, centrosome separation as well as maturation, chromosomal alignment, spindle assembly checkpoint, and cytokinesis. Phosphorylates numerous target proteins. Important for microtubule formation and/or stabilization. This is Aurora kinase A-B (aurka-b) from Xenopus laevis (African clawed frog).